A 277-amino-acid polypeptide reads, in one-letter code: S-formylglutathione hydrolase FrmB (277 aa).

Catalysis depends on charge relay system residues serine 145, aspartate 221, and histidine 254.

This sequence belongs to the esterase D family.

It catalyses the reaction S-formylglutathione + H2O = formate + glutathione + H(+). Functionally, serine hydrolase involved in the detoxification of formaldehyde. Hydrolyzes S-formylglutathione to glutathione and formate. This chain is S-formylglutathione hydrolase FrmB (frmB), found in Escherichia coli O139:H28 (strain E24377A / ETEC).